Here is a 212-residue protein sequence, read N- to C-terminus: Thymidylate kinase (212 aa).

10–17 (GPDGSGKS) contributes to the ATP binding site.

This sequence belongs to the thymidylate kinase family.

The catalysed reaction is dTMP + ATP = dTDP + ADP. Functionally, phosphorylation of dTMP to form dTDP in both de novo and salvage pathways of dTTP synthesis. This Exiguobacterium sp. (strain ATCC BAA-1283 / AT1b) protein is Thymidylate kinase.